Consider the following 117-residue polypeptide: DNA-directed RNA polymerase II subunit RPB11 (117 aa).

Met1 is modified (N-acetylmethionine).

It belongs to the archaeal Rpo11/eukaryotic RPB11/RPC19 RNA polymerase subunit family. In terms of assembly, component of the RNA polymerase II (Pol II) core complex consisting of 12 subunits: a ten-subunit catalytic core composed of POLR2A/RPB1, POLR2B/RPB2, POLR2C/RPB3, POLR2I/RPB9, POLR2J/RPB11, POLR2E/RPABC1, POLR2F/RPABC2, POLR2H/RPABC3, POLR2K/RPABC4 and POLR2L/RPABC5 and a mobile stalk composed of two subunits POLR2D/RPB4 and POLR2G/RPB7, protruding from the core and functioning primarily in transcription initiation. Part of Pol II(G) complex, in which Pol II core associates with an additional subunit POLR2M; unlike conventional Pol II, Pol II(G) functions as a transcriptional repressor. Part of TBP-based Pol II pre-initiation complex (PIC), in which Pol II core assembles with general transcription factors and other specific initiation factors including GTF2E1, GTF2E2, GTF2F1, GTF2F2, TCEA1, ERCC2, ERCC3, GTF2H2, GTF2H3, GTF2H4, GTF2H5, GTF2A1, GTF2A2, GTF2B and TBP; this large multi-subunit PIC complex mediates DNA unwinding and targets Pol II core to the transcription start site where the first phosphodiester bond forms. Interacts with PTPN6; this interaction promotes the recruitment of RNA pol II to the PCK1 promoter.

The protein localises to the nucleus. Its function is as follows. DNA-dependent RNA polymerase catalyzes the transcription of DNA into RNA using the four ribonucleoside triphosphates as substrates. Component of RNA polymerase II which synthesizes mRNA precursors and many functional non-coding RNAs. Pol II is the central component of the basal RNA polymerase II transcription machinery. It is composed of mobile elements that move relative to each other. POLR2J/RPB11 is part of the core element with the central large cleft. This chain is DNA-directed RNA polymerase II subunit RPB11 (POLR2J), found in Bos taurus (Bovine).